The following is a 449-amino-acid chain: 3-phosphoshikimate 1-carboxyvinyltransferase (449 aa).

Positions 1–29 (MSHDSVPSPITARAGTPLRGRLRPPGDKS) are disordered. The 3-phosphoshikimate site is built by lysine 28, serine 29, and arginine 33. Position 28 (lysine 28) interacts with phosphoenolpyruvate. Phosphoenolpyruvate is bound by residues glycine 101 and arginine 129. 4 residues coordinate 3-phosphoshikimate: serine 175, glutamine 177, aspartate 330, and lysine 357. Glutamine 177 provides a ligand contact to phosphoenolpyruvate. The active-site Proton acceptor is the aspartate 330. Phosphoenolpyruvate contacts are provided by arginine 361 and arginine 405.

It belongs to the EPSP synthase family. In terms of assembly, monomer.

The protein localises to the cytoplasm. It carries out the reaction 3-phosphoshikimate + phosphoenolpyruvate = 5-O-(1-carboxyvinyl)-3-phosphoshikimate + phosphate. It functions in the pathway metabolic intermediate biosynthesis; chorismate biosynthesis; chorismate from D-erythrose 4-phosphate and phosphoenolpyruvate: step 6/7. Functionally, catalyzes the transfer of the enolpyruvyl moiety of phosphoenolpyruvate (PEP) to the 5-hydroxyl of shikimate-3-phosphate (S3P) to produce enolpyruvyl shikimate-3-phosphate and inorganic phosphate. In Methylobacterium sp. (strain 4-46), this protein is 3-phosphoshikimate 1-carboxyvinyltransferase.